We begin with the raw amino-acid sequence, 82 residues long: Small ribosomal subunit protein bS18 (82 aa).

The segment covering 1 to 10 (MTDTNQNSSR) has biased composition (polar residues). Residues 1-21 (MTDTNQNSSRRPFHRRRKTCP) form a disordered region.

This sequence belongs to the bacterial ribosomal protein bS18 family. As to quaternary structure, part of the 30S ribosomal subunit. Forms a tight heterodimer with protein bS6.

Binds as a heterodimer with protein bS6 to the central domain of the 16S rRNA, where it helps stabilize the platform of the 30S subunit. The polypeptide is Small ribosomal subunit protein bS18 (Bartonella tribocorum (strain CIP 105476 / IBS 506)).